The primary structure comprises 131 residues: C-C motif chemokine 21 (131 aa).

An N-terminal signal peptide occupies residues 1–23 (MAQSLALSLLILVLAFGIPGTQG). 3 cysteine pairs are disulfide-bonded: C31–C57, C32–C75, and C103–C119. The disordered stretch occupies residues 89-131 (HLDKTPTPRKPVQGCRKDRGVPKNGKKGKGCKRTEQSQTPKGP).

The protein belongs to the intercrine beta (chemokine CC) family. In terms of assembly, monomer. Binds to CCR7. Interacts with PDPN; relocalizes PDPN to the basolateral membrane. Interacts with TNFAIP6 (via Link domain). Interacts with GPR174.

It is found in the secreted. Functionally, inhibits hemopoiesis and stimulates chemotaxis. Chemotactic in vitro for thymocytes and activated T-cells, but not for B-cells, macrophages, or neutrophils. Shows preferential activity towards naive T-cells. May play a role in mediating homing of lymphocytes to secondary lymphoid organs. Binds to atypical chemokine receptor ACKR4 and mediates the recruitment of beta-arrestin (ARRB1/2) to ACKR4. This Macaca mulatta (Rhesus macaque) protein is C-C motif chemokine 21 (CCL21).